We begin with the raw amino-acid sequence, 664 residues long: Sorbicillinoid biosynthetic cluster transcription factor sor3 (664 aa).

A DNA-binding region (zn(2)-C6 fungal-type) is located at residues 40–67 (CQSCRASKVKCDGGRPVCARCQKRGRAC). A disordered region spans residues 68 to 102 (SYSQHDAASPRGRGRQRAKAPTRQPRPIRSRASVE).

It is found in the nucleus. Transcription factor that acts in concert with sor4 which is a transcriptional activator of the gene cluster that mediates the biosynthesis of sorbicillinoids, a diverse group of yellow secondary metabolites that restrict growth of competing pathogenic fungi but not of bacteria. Regulates the cluster genes in a light dependent manner. Also plays a direct or indirect role in regulation of paracelsin biosynthesis and cellulase gene expression. The sequence is that of Sorbicillinoid biosynthetic cluster transcription factor sor3 from Hypocrea jecorina (strain QM6a) (Trichoderma reesei).